The chain runs to 93 residues: Putative pterin-4-alpha-carbinolamine dehydratase (93 aa).

Belongs to the pterin-4-alpha-carbinolamine dehydratase family.

It catalyses the reaction (4aS,6R)-4a-hydroxy-L-erythro-5,6,7,8-tetrahydrobiopterin = (6R)-L-erythro-6,7-dihydrobiopterin + H2O. This Chloroflexus aurantiacus (strain ATCC 29366 / DSM 635 / J-10-fl) protein is Putative pterin-4-alpha-carbinolamine dehydratase.